A 559-amino-acid polypeptide reads, in one-letter code: Paxillin (559 aa).

Positions 3-15 (DLDALLADLESTT) match the LD motif 1 motif. Positions 17 to 139 (HISKRPVFLT…SPTMTSTSLG (123 aa)) are disordered. Residue Tyr-31 is modified to Phosphotyrosine. Over residues 45–54 (VPPPVPPPPS) the composition is skewed to pro residues. The span at 79-98 (QQPQSQSPIYSSSAKSSSAS) shows a compositional bias: low complexity. The residue at position 118 (Tyr-118) is a Phosphotyrosine; by FAK1. The segment covering 121-137 (PNKQKSAEPSPTMTSTS) has biased composition (polar residues). Positions 144 to 156 (ELDRLLLELNAVQ) match the LD motif 2 motif. Disordered regions lie at residues 158-213 (NPPS…GIED) and 225-262 (LESSVPSPVPAITVSQGEVSSPQRVNASQQQTRISASS). The short motif at 217 to 229 (SVESLLDELESSV) is the LD motif 3 element. Residues 237 to 262 (TVSQGEVSSPQRVNASQQQTRISASS) are compositionally biased toward polar residues. The interval 263 to 282 (ATRELDELMASLSDFKFMAQ) is required for binding to PARVA and ILK. Short sequence motifs (LD motif) lie at residues 266–277 (ELDELMASLSDF) and 301–313 (QLDTMLGSLQSDL). The interval 281–301 (AQGKAGGSSSPPSTTPKPGSQ) is disordered. LIM zinc-binding domains lie at 326 to 376 (CGAC…CEKD), 385 to 435 (CYYC…CRKD), 444 to 494 (CGGC…CEVH), and 503 to 553 (CSGC…CQNC).

Interacts (via LD motif 4) with PARVA/PARVIN and ILK. Post-translationally, phosphorylated on tyrosine residues during integrin-mediated cell adhesion, embryonic development, fibroblast transformation and following stimulation of cells by mitogens.

The protein localises to the cytoplasm. The protein resides in the cytoskeleton. It localises to the cell junction. Its subcellular location is the focal adhesion. It is found in the cell cortex. Cytoskeletal protein involved in actin-membrane attachment at sites of cell adhesion to the extracellular matrix (focal adhesion). Binds in vitro to vinculin as well as to the SH3 domain of c-SRC and, when tyrosine phosphorylated, to the SH2 domain of v-CRK. The sequence is that of Paxillin (PXN) from Gallus gallus (Chicken).